Here is a 301-residue protein sequence, read N- to C-terminus: tRNA pseudouridine synthase B (301 aa).

Aspartate 45 acts as the Nucleophile in catalysis.

The protein belongs to the pseudouridine synthase TruB family. Type 1 subfamily.

The enzyme catalyses uridine(55) in tRNA = pseudouridine(55) in tRNA. Its function is as follows. Responsible for synthesis of pseudouridine from uracil-55 in the psi GC loop of transfer RNAs. This chain is tRNA pseudouridine synthase B, found in Streptomyces avermitilis (strain ATCC 31267 / DSM 46492 / JCM 5070 / NBRC 14893 / NCIMB 12804 / NRRL 8165 / MA-4680).